The following is a 456-amino-acid chain: F-box/FBD/LRR-repeat protein At3g52680 (456 aa).

The F-box domain occupies 20–73; the sequence is KDRISELPDGLLLKILSSLPTNIVVATSVLSKQWRSLWKLVPNLEFDSDDYESE. LRR repeat units follow at residues 74–100, 102–127, 152–179, 180–205, 225–252, 270–295, and 318–344; these read HYTF…RLKF, NFNP…VLDF, TLKL…HLEF, VRYK…RLYR, TIHD…LIEE, IAEV…LLNL, and TREA…KLTD. The FBD domain occupies 358 to 409; it reads KWNEPKDVPECLLSQLETFVWRRFDWGREEEKEIATYILKNGRRLKKATFST.

This Arabidopsis thaliana (Mouse-ear cress) protein is F-box/FBD/LRR-repeat protein At3g52680.